The following is an 891-amino-acid chain: Bifunctional aldehyde-alcohol dehydrogenase AdhE (891 aa).

The segment at 2–440 (AVTNVAELNA…ENVGPKHLIN (439 aa)) is aldehyde dehydrogenase. Residues 110–115 (IVPTTN), Gly195, and Gly213 contribute to the NAD(+) site. Cys246 serves as the catalytic Nucleophile. Residues Glu335 and Leu419 each contribute to the NAD(+) site. A linker region spans residues 441–448 (KKTVAKRA). An alcohol dehydrogenase region spans residues 449–891 (ENMLWHKLPK…KAEKKAKKSA (443 aa)). NAD(+) contacts are provided by residues Asp487, Asp519, 546 to 550 (GSPMD), 597 to 598 (TT), Val610, Lys619, and Leu638. 4 residues coordinate Fe cation: Asp653, His657, His723, and His737.

This sequence in the N-terminal section; belongs to the aldehyde dehydrogenase family. In the C-terminal section; belongs to the iron-containing alcohol dehydrogenase family. As to quaternary structure, forms long filaments, called spirosomes. The cofactor is Fe(2+).

It carries out the reaction acetaldehyde + NAD(+) + CoA = acetyl-CoA + NADH + H(+). The catalysed reaction is ethanol + NAD(+) = acetaldehyde + NADH + H(+). It catalyses the reaction a primary alcohol + NAD(+) = an aldehyde + NADH + H(+). Its function is as follows. Under fermentative conditions, catalyzes the sequential NADH-dependent reduction of acetyl-CoA to acetaldehyde and then to ethanol. Plays an important role in virulence and is critical for proper regulation of virulence gene expression. This chain is Bifunctional aldehyde-alcohol dehydrogenase AdhE, found in Escherichia coli O157:H7.